Reading from the N-terminus, the 413-residue chain is Serine hydroxymethyltransferase (413 aa).

(6S)-5,6,7,8-tetrahydrofolate contacts are provided by residues Leu-119 and 123-125; that span reads GHL. Residue Lys-228 is modified to N6-(pyridoxal phosphate)lysine. Residue 351-353 participates in (6S)-5,6,7,8-tetrahydrofolate binding; the sequence is SPF.

Belongs to the SHMT family. As to quaternary structure, homodimer. Requires pyridoxal 5'-phosphate as cofactor.

The protein localises to the cytoplasm. The catalysed reaction is (6R)-5,10-methylene-5,6,7,8-tetrahydrofolate + glycine + H2O = (6S)-5,6,7,8-tetrahydrofolate + L-serine. It functions in the pathway one-carbon metabolism; tetrahydrofolate interconversion. It participates in amino-acid biosynthesis; glycine biosynthesis; glycine from L-serine: step 1/1. Its function is as follows. Catalyzes the reversible interconversion of serine and glycine with tetrahydrofolate (THF) serving as the one-carbon carrier. This reaction serves as the major source of one-carbon groups required for the biosynthesis of purines, thymidylate, methionine, and other important biomolecules. Also exhibits THF-independent aldolase activity toward beta-hydroxyamino acids, producing glycine and aldehydes, via a retro-aldol mechanism. This is Serine hydroxymethyltransferase from Lysinibacillus sphaericus (strain C3-41).